The sequence spans 462 residues: Phosphoglucosamine mutase (462 aa).

Ser112 serves as the catalytic Phosphoserine intermediate. Residues Ser112, Asp250, Asp252, and Asp254 each contribute to the Mg(2+) site. The residue at position 112 (Ser112) is a Phosphoserine.

Belongs to the phosphohexose mutase family. The cofactor is Mg(2+). Post-translationally, activated by phosphorylation.

It carries out the reaction alpha-D-glucosamine 1-phosphate = D-glucosamine 6-phosphate. Functionally, catalyzes the conversion of glucosamine-6-phosphate to glucosamine-1-phosphate. The polypeptide is Phosphoglucosamine mutase (Parasynechococcus marenigrum (strain WH8102)).